The chain runs to 633 residues: NBPF family member NBPF3 (633 aa).

Residues 15–52 form a disordered region; that stretch reads RGPDVETSPFGAPRAASHGVGRHQELRDPTVPGPTSSA. Residues 127–186 adopt a coiled-coil conformation; it reads LRDERLLTEEKLAEELGQAEELRQYKVLVHSQERELTQLREKLQEGRDASRSLNQHLQAL. 5 consecutive Olduvai domains span residues 221-313, 314-402, 405-460, 461-552, and 555-633; these read ENDD…CIIP, ENES…ATSP, SREL…LDLD, RMKK…PPCP, and NEVL…IFPH. The span at 316–326 shows a compositional bias: basic and acidic residues; the sequence is ESDHEQEEEKG. The tract at residues 316-370 is disordered; sequence ESDHEQEEEKGPVSPRNLQESEEEEAPQESWDEGDWTLSIPPDMSASYQSDRSTF. Over residues 335–350 the composition is skewed to acidic residues; sequence ESEEEEAPQESWDEGD. The segment at 463–484 is disordered; that stretch reads KKDQEEEEDQGPPCPRLSRELP.

Belongs to the NBPF family. In terms of tissue distribution, expressed in testis and fetal heart, as well as in non small cell lung carcinoma and neuroblastoma cell line.

The protein resides in the cytoplasm. The polypeptide is NBPF family member NBPF3 (Homo sapiens (Human)).